A 293-amino-acid chain; its full sequence is Microtubule-associated protein RP/EB family member 1B (293 aa).

The region spanning 13–115 (FVGRNEILSW…FLQWLKRFCD (103 aa)) is the Calponin-homology (CH) domain. Disordered regions lie at residues 124–188 (ENYN…SAEV) and 262–293 (LGLEGYEEEGKEEEEEEEEEEEEAAAAAETQT). Over residues 129-141 (VERRSRGGREKSV) the composition is skewed to basic and acidic residues. The span at 151–166 (LQTNNMHHPPVATSNK) shows a compositional bias: polar residues. In terms of domain architecture, EB1 C-terminal spans 180-250 (GGSNSSAEVQ…LYATDANESV (71 aa)). Acidic residues predominate over residues 266-285 (GYEEEGKEEEEEEEEEEEEA).

The protein belongs to the MAPRE family. In terms of assembly, homodimer and heterodimer with EB1A. Highly expressed in guard cells of leaf stomata, pollen grains and pollen tubes. Expressed in young roots.

It is found in the cytoplasm. The protein localises to the cytoskeleton. The protein resides in the spindle pole. Its subcellular location is the phragmoplast. In terms of biological role, binds to the plus end of microtubules and regulates the dynamics of the microtubule cytoskeleton. May be involved in anchoring microtubules to their nucleation sites and/or functioning as a reservoir for distribution to the growing end. In plants, microtubule minus ends are not necessarily severed from the nucleation site and transported to the plus end of a microtubule as part of the recycling process. May play a role in endomembrane organization during polarized growth of plant cells. The chain is Microtubule-associated protein RP/EB family member 1B (EB1B) from Arabidopsis thaliana (Mouse-ear cress).